The primary structure comprises 61 residues: Small ribosomal subunit protein uS14 (61 aa).

Residues Cys24, Cys27, Cys40, and Cys43 each coordinate Zn(2+).

Belongs to the universal ribosomal protein uS14 family. Zinc-binding uS14 subfamily. In terms of assembly, part of the 30S ribosomal subunit. Contacts proteins S3 and S10. It depends on Zn(2+) as a cofactor.

Its function is as follows. Binds 16S rRNA, required for the assembly of 30S particles and may also be responsible for determining the conformation of the 16S rRNA at the A site. This chain is Small ribosomal subunit protein uS14, found in Leptospira borgpetersenii serovar Hardjo-bovis (strain JB197).